The primary structure comprises 290 residues: Short neuropeptide F (290 aa).

A signal peptide spans 1–32 (MFRFNPQLSHGCALALICCLLNLLMMHQPTNA). Positions 33 to 87 (ELSPVVQGEFFLPILPDDHPPNTDTSFGGPISNLYDNLLQREYAGPVVFPNHQVE) are excised as a propeptide. Residues F100 and F134 each carry the phenylalanine amide modification. Positions 138 to 290 (DPTLPQMRRT…IETSSIAPKN (153 aa)) are excised as a propeptide. The interval 238–290 (VAGYANDGDDTEAQLDEDTSEFQREARKPMRLRWGRSTGKAPQIETSSIAPKN) is disordered. The segment covering 244 to 257 (DGDDTEAQLDEDTS) has biased composition (acidic residues). Residues 281-290 (IETSSIAPKN) show a composition bias toward polar residues.

Belongs to the NPY family.

It is found in the secreted. Its function is as follows. Plays a role in controlling food intake and regulating body size. The chain is Short neuropeptide F from Drosophila pseudoobscura pseudoobscura (Fruit fly).